The chain runs to 254 residues: HLA class II histocompatibility antigen, DQ alpha 1 chain (254 aa).

The N-terminal stretch at 1-23 (MILNKALMLGALALTTVMSPCGG) is a signal peptide. The segment at 24-119 (EDIVADHVAS…EVPEVTVFSK (96 aa)) is alpha-1. Residues 24–216 (EDIVADHVAS…IPAPMSELTE (193 aa)) lie on the Extracellular side of the membrane. Asn103 and Asn143 each carry an N-linked (GlcNAc...) asparagine glycan. The region spanning 112 to 204 (PEVTVFSKSP…LDKPLLKHWE (93 aa)) is the Ig-like C1-type domain. Positions 120–203 (SPVTLGQPNI…GLDKPLLKHW (84 aa)) are alpha-2. Cys132 and Cys188 are joined by a disulfide. A connecting peptide region spans residues 204–216 (EPEIPAPMSELTE). The helical transmembrane segment at 217–239 (TVVCALGLSVGLVGIVVGTVFII) threads the bilayer. Residues 240–254 (RGLRSVGASRHQGPL) are Cytoplasmic-facing.

It belongs to the MHC class II family. Heterodimer of an alpha and a beta subunit; also referred as MHC class II molecule. In the endoplasmic reticulum (ER) it forms a heterononamer; 3 MHC class II molecules bind to a CD74 homotrimer (also known as invariant chain or HLA class II histocompatibility antigen gamma chain). In the endosomal/lysosomal system; CD74 undergoes sequential degradation by various proteases; leaving a small fragment termed CLIP on each MHC class II molecule. MHC class II molecule interacts with HLA_DM, and HLA_DO in B-cells, in order to release CLIP and facilitate the binding of antigenic peptides.

Its subcellular location is the cell membrane. It localises to the endoplasmic reticulum membrane. The protein localises to the golgi apparatus. It is found in the trans-Golgi network membrane. The protein resides in the endosome membrane. Its subcellular location is the lysosome membrane. In terms of biological role, binds peptides derived from antigens that access the endocytic route of antigen presenting cells (APC) and presents them on the cell surface for recognition by the CD4 T-cells. The peptide binding cleft accommodates peptides of 10-30 residues. The peptides presented by MHC class II molecules are generated mostly by degradation of proteins that access the endocytic route, where they are processed by lysosomal proteases and other hydrolases. Exogenous antigens that have been endocytosed by the APC are thus readily available for presentation via MHC II molecules, and for this reason this antigen presentation pathway is usually referred to as exogenous. As membrane proteins on their way to degradation in lysosomes as part of their normal turn-over are also contained in the endosomal/lysosomal compartments, exogenous antigens must compete with those derived from endogenous components. Autophagy is also a source of endogenous peptides, autophagosomes constitutively fuse with MHC class II loading compartments. In addition to APCs, other cells of the gastrointestinal tract, such as epithelial cells, express MHC class II molecules and CD74 and act as APCs, which is an unusual trait of the GI tract. To produce a MHC class II molecule that presents an antigen, three MHC class II molecules (heterodimers of an alpha and a beta chain) associate with a CD74 trimer in the ER to form a heterononamer. Soon after the entry of this complex into the endosomal/lysosomal system where antigen processing occurs, CD74 undergoes a sequential degradation by various proteases, including CTSS and CTSL, leaving a small fragment termed CLIP (class-II-associated invariant chain peptide). The removal of CLIP is facilitated by HLA-DM via direct binding to the alpha-beta-CLIP complex so that CLIP is released. HLA-DM stabilizes MHC class II molecules until primary high affinity antigenic peptides are bound. The MHC II molecule bound to a peptide is then transported to the cell membrane surface. In B-cells, the interaction between HLA-DM and MHC class II molecules is regulated by HLA-DO. Primary dendritic cells (DCs) also to express HLA-DO. Lysosomal microenvironment has been implicated in the regulation of antigen loading into MHC II molecules, increased acidification produces increased proteolysis and efficient peptide loading. This chain is HLA class II histocompatibility antigen, DQ alpha 1 chain (HLA-DQA1), found in Homo sapiens (Human).